Here is a 267-residue protein sequence, read N- to C-terminus: Translation initiation factor 2 subunit alpha (267 aa).

One can recognise an S1 motif domain in the interval 12 to 83 (GEIVMATVER…KRKYANLSLR (72 aa)).

Belongs to the eIF-2-alpha family. Heterotrimer composed of an alpha, a beta and a gamma chain.

EIF-2 functions in the early steps of protein synthesis by forming a ternary complex with GTP and initiator tRNA. The protein is Translation initiation factor 2 subunit alpha of Methanopyrus kandleri (strain AV19 / DSM 6324 / JCM 9639 / NBRC 100938).